The sequence spans 329 residues: Holliday junction branch migration complex subunit RuvB (329 aa).

The tract at residues 1 to 20 is disordered; sequence MSRILEGDPVEGEKSWENEL. The tract at residues 1 to 181 is large ATPase domain (RuvB-L); the sequence is MSRILEGDPV…FGIVERLQFY (181 aa). Positions 11-20 are enriched in basic and acidic residues; that stretch reads EGEKSWENEL. ATP-binding positions include leucine 20, arginine 21, glycine 62, lysine 65, threonine 66, threonine 67, 128-130, arginine 171, tyrosine 181, and arginine 218; that span reads EDY. Residue threonine 66 coordinates Mg(2+). The small ATPAse domain (RuvB-S) stretch occupies residues 182–252; the sequence is DKDALRQILM…IAVYALNQLG (71 aa). The interval 255–329 is head domain (RuvB-H); that stretch reads QYGLDLMDRR…FAKSSVLADK (75 aa). DNA-binding residues include arginine 291, lysine 310, and arginine 315.

Belongs to the RuvB family. In terms of assembly, homohexamer. Forms an RuvA(8)-RuvB(12)-Holliday junction (HJ) complex. HJ DNA is sandwiched between 2 RuvA tetramers; dsDNA enters through RuvA and exits via RuvB. An RuvB hexamer assembles on each DNA strand where it exits the tetramer. Each RuvB hexamer is contacted by two RuvA subunits (via domain III) on 2 adjacent RuvB subunits; this complex drives branch migration. In the full resolvosome a probable DNA-RuvA(4)-RuvB(12)-RuvC(2) complex forms which resolves the HJ.

The protein resides in the cytoplasm. It catalyses the reaction ATP + H2O = ADP + phosphate + H(+). In terms of biological role, the RuvA-RuvB-RuvC complex processes Holliday junction (HJ) DNA during genetic recombination and DNA repair, while the RuvA-RuvB complex plays an important role in the rescue of blocked DNA replication forks via replication fork reversal (RFR). RuvA specifically binds to HJ cruciform DNA, conferring on it an open structure. The RuvB hexamer acts as an ATP-dependent pump, pulling dsDNA into and through the RuvAB complex. RuvB forms 2 homohexamers on either side of HJ DNA bound by 1 or 2 RuvA tetramers; 4 subunits per hexamer contact DNA at a time. Coordinated motions by a converter formed by DNA-disengaged RuvB subunits stimulates ATP hydrolysis and nucleotide exchange. Immobilization of the converter enables RuvB to convert the ATP-contained energy into a lever motion, pulling 2 nucleotides of DNA out of the RuvA tetramer per ATP hydrolyzed, thus driving DNA branch migration. The RuvB motors rotate together with the DNA substrate, which together with the progressing nucleotide cycle form the mechanistic basis for DNA recombination by continuous HJ branch migration. Branch migration allows RuvC to scan DNA until it finds its consensus sequence, where it cleaves and resolves cruciform DNA. The polypeptide is Holliday junction branch migration complex subunit RuvB (Bdellovibrio bacteriovorus (strain ATCC 15356 / DSM 50701 / NCIMB 9529 / HD100)).